Consider the following 962-residue polypeptide: Glutamate receptor 1 (962 aa).

The N-terminal stretch at 1 to 25 (MFSSFSFLNMFGVLFTVFNLTVVQP) is a signal peptide. Over 26 to 591 (YPSHIIIKSF…SVFSFMQPLS (566 aa)) the chain is Extracellular. N-linked (GlcNAc...) asparagine glycosylation is found at Asn190, Asn220, Asn275, Asn333, Asn441, and Asn482. Residues 592-612 (TEIWMYIIFAYIGVSVVIFLV) traverse the membrane as a helical segment. Residues 613–668 (SRFSPYEWRVEETSRGGFTISNDFSVYNCLWFTLAAFMQQGTDILPRSISGRIASS) lie on the Cytoplasmic side of the membrane. Residues 669–689 (AWWFFTMIIVSSYTANLAAFL) traverse the membrane as a helical segment. Residues 690–855 (TLEKMQAPIE…GSSASLNLSK (166 aa)) are Extracellular-facing. A glycan (N-linked (GlcNAc...) asparagine) is linked at Asn852. A helical membrane pass occupies residues 856 to 876 (VAGIFYILMGGMVISMLAALG). Topologically, residues 877–962 (EFLYRSRIEA…PANTLYNTAV (86 aa)) are cytoplasmic.

Belongs to the glutamate-gated ion channel (TC 1.A.10.1) family. Interacts with sol-1. Interacts with cni-1; the interaction negatively regulates export of glr-1 from the endoplasmic reticulum to synapses. Interacts with usp-46; the interaction results in deubiquitination of glr-1. Ubiquitinated. Deubiquitinated by usp-46 which prevents its degradation. In terms of processing, glycosylated. As to expression, command interneurons of the locomotory control circuit (AIB, AVA, AVB, AVD, AVE and PVC) and motor neurons (RMD, RIM, SMD, AVG, PVQ and URY).

The protein resides in the postsynaptic cell membrane. The protein localises to the endoplasmic reticulum. It localises to the synapse. Its subcellular location is the cell membrane. It is found in the recycling endosome. The protein resides in the cell projection. The protein localises to the dendrite. It localises to the perikaryon. Functionally, non-NMDA (N-methyl-D-aspartate) ionotropic glutamate receptor. L-glutamate acts as an excitatory neurotransmitter at many synapses in the central nervous system. The postsynaptic actions of glutamate are mediated by a variety of receptors that are named according to their selective agonists. May contribute to a sensory discrimination between mechanical and chemical stimuli. Plays a role in controlling movement in response to environmental cues such as food availability and mechanosensory stimulation such as the nose touch response. In AIB interneurons, promotes omega turns, a movement that frequently follows backwards locomotion or 'reversals' in response to environmental cues while possibly playing an inhibitory role in alternative neurons to inhibit omega turns. The protein is Glutamate receptor 1 of Caenorhabditis elegans.